The chain runs to 120 residues: MFSLTQKIGFNAEKTACRYLQKQGLSFITKNFRYKQGEIDLIMSDQSILVFIEVRYRRFSDFIHPVATVTPLKQRRLIKTELHYLQKHRLLDKISCRFDIVGITADRQITWIKNAIEVEY.

This sequence belongs to the UPF0102 family.

The sequence is that of UPF0102 protein CbuK_0265 from Coxiella burnetii (strain CbuK_Q154) (Coxiella burnetii (strain Q154)).